We begin with the raw amino-acid sequence, 490 residues long: Glutamate--tRNA ligase (490 aa).

The short motif at 10–20 (PSPTGRMHVGN) is the 'HIGH' region element. 4 residues coordinate Zn(2+): cysteine 109, cysteine 111, cysteine 140, and histidine 142. The 'KMSKS' region motif lies at 257–261 (KLSKR). Lysine 260 serves as a coordination point for ATP.

Belongs to the class-I aminoacyl-tRNA synthetase family. Glutamate--tRNA ligase type 1 subfamily. In terms of assembly, monomer. It depends on Zn(2+) as a cofactor.

Its subcellular location is the cytoplasm. The catalysed reaction is tRNA(Glu) + L-glutamate + ATP = L-glutamyl-tRNA(Glu) + AMP + diphosphate. Catalyzes the attachment of glutamate to tRNA(Glu) in a two-step reaction: glutamate is first activated by ATP to form Glu-AMP and then transferred to the acceptor end of tRNA(Glu). In Lachnoclostridium phytofermentans (strain ATCC 700394 / DSM 18823 / ISDg) (Clostridium phytofermentans), this protein is Glutamate--tRNA ligase.